Consider the following 350-residue polypeptide: tRNA uridine(34) hydroxylase (350 aa).

The 95-residue stretch at 146-240 (DDPDALFIDM…YARKAREQGL (95 aa)) folds into the Rhodanese domain. The Cysteine persulfide intermediate role is filled by C200.

It belongs to the TrhO family.

It carries out the reaction uridine(34) in tRNA + AH2 + O2 = 5-hydroxyuridine(34) in tRNA + A + H2O. Functionally, catalyzes oxygen-dependent 5-hydroxyuridine (ho5U) modification at position 34 in tRNAs. This is tRNA uridine(34) hydroxylase from Shigella sonnei (strain Ss046).